Consider the following 226-residue polypeptide: 3-dehydroquinate dehydratase (226 aa).

Residues Ser9, 32–34, and Arg59 each bind 3-dehydroquinate; that span reads EVR. The active-site Proton donor/acceptor is the His119. Lys146 acts as the Schiff-base intermediate with substrate in catalysis. 3-dehydroquinate-binding residues include Arg187, Thr208, and Gln212.

The protein belongs to the type-I 3-dehydroquinase family. Homodimer.

The catalysed reaction is 3-dehydroquinate = 3-dehydroshikimate + H2O. Its pathway is metabolic intermediate biosynthesis; chorismate biosynthesis; chorismate from D-erythrose 4-phosphate and phosphoenolpyruvate: step 3/7. In terms of biological role, involved in the third step of the chorismate pathway, which leads to the biosynthesis of aromatic amino acids. Catalyzes the cis-dehydration of 3-dehydroquinate (DHQ) and introduces the first double bond of the aromatic ring to yield 3-dehydroshikimate. The protein is 3-dehydroquinate dehydratase of Desulfotalea psychrophila (strain LSv54 / DSM 12343).